A 411-amino-acid chain; its full sequence is Adenylosuccinate synthetase (411 aa).

Residues 11-17 (GDEGKGK) and 39-41 (GHT) contribute to the GTP site. D12 serves as the catalytic Proton acceptor. Mg(2+)-binding residues include D12 and G39. IMP-binding positions include 12–15 (DEGK), 37–40 (NAGH), T121, R135, Q215, T230, and R294. The active-site Proton donor is the H40. 290–296 (TTTKRPR) contacts substrate. Residues R296, 322–324 (KLD), and 400–402 (STS) each bind GTP.

It belongs to the adenylosuccinate synthetase family. In terms of assembly, homodimer. Mg(2+) is required as a cofactor.

It is found in the cytoplasm. It catalyses the reaction IMP + L-aspartate + GTP = N(6)-(1,2-dicarboxyethyl)-AMP + GDP + phosphate + 2 H(+). The protein operates within purine metabolism; AMP biosynthesis via de novo pathway; AMP from IMP: step 1/2. Its function is as follows. Plays an important role in the de novo pathway of purine nucleotide biosynthesis. Catalyzes the first committed step in the biosynthesis of AMP from IMP. The polypeptide is Adenylosuccinate synthetase (Helicobacter pylori (strain J99 / ATCC 700824) (Campylobacter pylori J99)).